The chain runs to 218 residues: 1-Cys peroxiredoxin PER1 (218 aa).

Residues 4–164 (LTIGDTVPNL…VVRAVDSLLT (161 aa)) form the Thioredoxin domain. Catalysis depends on Cys-46, which acts as the Cysteine sulfenic acid (-SOH) intermediate. Positions 194–217 (KKMFPQGFETADLPSKKGYLRFTK) match the Bipartite nuclear localization signal motif.

Belongs to the peroxiredoxin family. Prx6 subfamily.

It is found in the nucleus. Its subcellular location is the cytoplasm. It catalyses the reaction a hydroperoxide + [thioredoxin]-dithiol = an alcohol + [thioredoxin]-disulfide + H2O. Thiol-specific peroxidase that catalyzes the reduction of hydrogen peroxide and organic hydroperoxides to water and alcohols, respectively. Seems to contribute to the inhibition of germination during stress. The chain is 1-Cys peroxiredoxin PER1 (PER1) from Triticum aestivum (Wheat).